The chain runs to 357 residues: Glycerol-1-phosphate dehydrogenase [NAD(P)+] (357 aa).

NAD(+) contacts are provided by residues glycine 104–aspartate 108 and threonine 126–serine 129. Substrate is bound at residue aspartate 131. Position 135 (serine 135) interacts with NAD(+). Aspartate 178 serves as a coordination point for substrate. Zn(2+) contacts are provided by aspartate 178 and histidine 258. Histidine 262 is a binding site for substrate. Residue histidine 274 coordinates Zn(2+).

This sequence belongs to the glycerol-1-phosphate dehydrogenase family. Requires Zn(2+) as cofactor.

Its subcellular location is the cytoplasm. It catalyses the reaction sn-glycerol 1-phosphate + NAD(+) = dihydroxyacetone phosphate + NADH + H(+). The enzyme catalyses sn-glycerol 1-phosphate + NADP(+) = dihydroxyacetone phosphate + NADPH + H(+). It participates in membrane lipid metabolism; glycerophospholipid metabolism. In terms of biological role, catalyzes the NAD(P)H-dependent reduction of dihydroxyacetonephosphate (DHAP or glycerone phosphate) to glycerol 1-phosphate (G1P). The G1P thus generated is used as the glycerophosphate backbone of phospholipids in the cellular membranes of Archaea. The sequence is that of Glycerol-1-phosphate dehydrogenase [NAD(P)+] from Methanococcoides burtonii (strain DSM 6242 / NBRC 107633 / OCM 468 / ACE-M).